The chain runs to 363 residues: Protein RecA (363 aa).

79 to 86 serves as a coordination point for ATP; the sequence is GPESSGKT.

Belongs to the RecA family.

The protein resides in the cytoplasm. Functionally, can catalyze the hydrolysis of ATP in the presence of single-stranded DNA, the ATP-dependent uptake of single-stranded DNA by duplex DNA, and the ATP-dependent hybridization of homologous single-stranded DNAs. It interacts with LexA causing its activation and leading to its autocatalytic cleavage. The protein is Protein RecA of Methylobacterium radiotolerans (strain ATCC 27329 / DSM 1819 / JCM 2831 / NBRC 15690 / NCIMB 10815 / 0-1).